Consider the following 326-residue polypeptide: Probable cell division protein WhiA (326 aa).

Residues 275–308 (SLDELGRLADPPMTKDAIAGRIRRLLAMADKRAL) constitute a DNA-binding region (H-T-H motif).

Belongs to the WhiA family.

In terms of biological role, involved in cell division and chromosome segregation. The sequence is that of Probable cell division protein WhiA from Paenarthrobacter aurescens (strain TC1).